The primary structure comprises 209 residues: Uracil phosphoribosyltransferase (209 aa).

5-phospho-alpha-D-ribose 1-diphosphate is bound by residues arginine 79, arginine 104, and 131 to 139 (DPMLATGGS). Residues isoleucine 194 and 199–201 (GDA) contribute to the uracil site. Aspartate 200 is a 5-phospho-alpha-D-ribose 1-diphosphate binding site.

This sequence belongs to the UPRTase family. Requires Mg(2+) as cofactor.

It carries out the reaction UMP + diphosphate = 5-phospho-alpha-D-ribose 1-diphosphate + uracil. It functions in the pathway pyrimidine metabolism; UMP biosynthesis via salvage pathway; UMP from uracil: step 1/1. Its activity is regulated as follows. Allosterically activated by GTP. In terms of biological role, catalyzes the conversion of uracil and 5-phospho-alpha-D-ribose 1-diphosphate (PRPP) to UMP and diphosphate. The protein is Uracil phosphoribosyltransferase of Latilactobacillus sakei (Lactobacillus sakei).